Reading from the N-terminus, the 492-residue chain is Zinc finger protein GLIS2 (492 aa).

Residues 49-101 (VITPICSSPPPGFRYRDGDSPPFSSPPIVDLSLSPPSGTDSPSRSSLSPDRAA) form a disordered region. The tract at residues 69 to 129 (PPFSSPPIVD…SPFQFFLPLG (61 aa)) is transcription activation. Positions 82–97 (SPPSGTDSPSRSSLSP) are enriched in low complexity. Residues 138-161 (MFMSPPKENRLSLEFTEQKQLVCQ) form a transcription repression region. The C2H2-type 1 zinc finger occupies 158-183 (LVCQWAKCNRLFELLQELVDHVNDFH). The C2H2-type 2; degenerate zinc finger occupies 192-219 (YCCHWEGCARRGRGFNARYKMLIHIRTH). 3 C2H2-type zinc fingers span residues 225 to 247 (HCCPTCHKSFSRLENLKIHNRSH), 253 to 277 (YMCPYEGCNKRYSNSSDRFKHTRTH), and 283 to 307 (YYCKMPGCQKRYTDPSSLRKHIKAH). A compositionally biased stretch (basic and acidic residues) spans 423–444 (VENEKRPKGQRGDSSERTDGSK). The interval 423–450 (VENEKRPKGQRGDSSERTDGSKLRPGSI) is disordered.

It belongs to the GLI C2H2-type zinc-finger protein family.

Its subcellular location is the nucleus speckle. It is found in the cytoplasm. Can act either as a transcription repressor or as a transcription activator, depending on the cell context. May be involved in neuron differentiation. This is Zinc finger protein GLIS2 (glis2) from Xenopus laevis (African clawed frog).